Here is a 359-residue protein sequence, read N- to C-terminus: Histidinol-phosphate aminotransferase (359 aa).

At Lys220 the chain carries N6-(pyridoxal phosphate)lysine.

This sequence belongs to the class-II pyridoxal-phosphate-dependent aminotransferase family. Histidinol-phosphate aminotransferase subfamily. In terms of assembly, homodimer. It depends on pyridoxal 5'-phosphate as a cofactor.

It catalyses the reaction L-histidinol phosphate + 2-oxoglutarate = 3-(imidazol-4-yl)-2-oxopropyl phosphate + L-glutamate. It functions in the pathway amino-acid biosynthesis; L-histidine biosynthesis; L-histidine from 5-phospho-alpha-D-ribose 1-diphosphate: step 7/9. The sequence is that of Histidinol-phosphate aminotransferase from Neisseria gonorrhoeae (strain ATCC 700825 / FA 1090).